A 506-amino-acid polypeptide reads, in one-letter code: MTEHLPASQVSFDENALIAERRAKLLALRAQGVVYPNDVKREHYAADVQAAFANVETWTAETLEASSHRVRMAGRLMAKRLMGKASFAQIQDESGRIQLLIQSNVLGEDSYAAFKVLDVGDIIAVEGGLTRTRTGELSVKVNVLRLLTKALRPLPDKWHGLTDVEQRYRQRYVDLIVTPESREIFIKRSKIIRALRTWLDARLFLEVETPMMHYIPGGAAAKPFVTYHNALDLELYLRVAPELYLKRLVVGGLERVYEINRNFRNEGVSTRHNPEFTMLELYEAYSTYHEVMDLAETMIRDTAQSVLGTTQVIWDGAQIDLGPIFRRWRMDEAVCHHNPEISVAECTDRDALLLHCERLKIKVKSSYGWGRLLLSIFEATVEHTLIQPTFITDHPVEISPLARESDIESGYTDRFELFINGKEIANGFSELNDPEEQAMRFQKQVEAKEGGDDEAMYYDADYIRALEYGMAPTGGLGIGVDRLVMLLTGSTSIRDVLLFPYMRPER.

Mg(2+) contacts are provided by Glu-416 and Glu-423.

The protein belongs to the class-II aminoacyl-tRNA synthetase family. In terms of assembly, homodimer. It depends on Mg(2+) as a cofactor.

The protein localises to the cytoplasm. The enzyme catalyses tRNA(Lys) + L-lysine + ATP = L-lysyl-tRNA(Lys) + AMP + diphosphate. The sequence is that of Lysine--tRNA ligase from Xylella fastidiosa (strain M12).